Reading from the N-terminus, the 141-residue chain is Large ribosomal subunit protein uL11 (141 aa).

The protein belongs to the universal ribosomal protein uL11 family. As to quaternary structure, part of the ribosomal stalk of the 50S ribosomal subunit. Interacts with L10 and the large rRNA to form the base of the stalk. L10 forms an elongated spine to which L12 dimers bind in a sequential fashion forming a multimeric L10(L12)X complex. In terms of processing, one or more lysine residues are methylated.

Forms part of the ribosomal stalk which helps the ribosome interact with GTP-bound translation factors. This is Large ribosomal subunit protein uL11 from Chlorobium phaeobacteroides (strain BS1).